A 383-amino-acid chain; its full sequence is Chitinase-3-like protein 1 (383 aa).

The signal sequence occupies residues 1–21 (MGLRVAQTGFVALVLLQSCAA). The GH18 domain maps to 22 to 383 (YKLVCYYTSW…SAIKDVLAAA (362 aa)). C26 and C51 are oxidised to a cystine. A glycan (N-linked (GlcNAc...) asparagine) is linked at N60. Residues 70–71 (EW), 97–100 (GGWN), Y141, 204–207 (LTYD), and R263 contribute to the chitin site. C300 and C364 are disulfide-bonded. Positions 324–338 (QWVGYDDQESVKNKA) are important for AKT1 activation and IL8 production. A chitin-binding site is contributed by W352.

This sequence belongs to the glycosyl hydrolase 18 family. Monomer. Detected in smooth muscle cells in atherosclerotic plaques. Detected in regions of vascular occlusion in the aorta.

It is found in the secreted. The protein localises to the extracellular space. Its subcellular location is the cytoplasm. The protein resides in the perinuclear region. It localises to the endoplasmic reticulum. Its function is as follows. Carbohydrate-binding lectin with a preference for chitin. Has no chitinase activity. May play a role in tissue remodeling and in the capacity of cells to respond to and cope with changes in their environment. Plays a role in T-helper cell type 2 (Th2) inflammatory response and IL-13-induced inflammation, regulating allergen sensitization, inflammatory cell apoptosis, dendritic cell accumulation and M2 macrophage differentiation. Facilitates invasion of pathogenic enteric bacteria into colonic mucosa and lymphoid organs. Mediates activation of AKT1 signaling pathway and subsequent IL8 production in colonic epithelial cells. Regulates antibacterial responses in lung by contributing to macrophage bacterial killing, controlling bacterial dissemination and augmenting host tolerance. Also regulates hyperoxia-induced injury, inflammation and epithelial apoptosis in lung. Stimulates migration and adhesion of cultured vascular smooth muscle cells. This is Chitinase-3-like protein 1 (CHI3L1) from Sus scrofa (Pig).